The chain runs to 127 residues: 3-aminoacrylate deaminase RutC (127 aa).

Belongs to the RutC family.

The enzyme catalyses (Z)-3-aminoacrylate + H2O + H(+) = 3-oxopropanoate + NH4(+). In terms of biological role, involved in pyrimidine catabolism. Catalyzes the deamination of 3-aminoacrylate to malonic semialdehyde, a reaction that can also occur spontaneously. RutC may facilitate the reaction and modulate the metabolic fitness, rather than catalyzing essential functions. In Pseudomonas savastanoi pv. phaseolicola (strain 1448A / Race 6) (Pseudomonas syringae pv. phaseolicola (strain 1448A / Race 6)), this protein is 3-aminoacrylate deaminase RutC.